Consider the following 730-residue polypeptide: Dual function macrocyclase-peptidase POPB (730 aa).

Catalysis depends on charge relay system residues Ser577, Asp661, and His698.

It belongs to the peptidase S9A family. As to quaternary structure, monomer. As to expression, expressed in the pileus (cap) and lamellae where it colocalizes with amanitin.

The enzyme catalyses Hydrolysis of Pro-|-Xaa &gt;&gt; Ala-|-Xaa in oligopeptides.. Functionally, dual function macrocyclase-peptidase involved in the biosynthesis of the highly toxic amanitin toxin family of macrocycles. Cleaves peptide bonds on the C-terminal side of prolyl residues. The enzyme first removes 10 residues from the N-terminus of a 35-residue substrate. Conformational trapping of the 25 amino-acid peptide forces the enzyme to release this intermediate rather than proceed to macrocyclization. The enzyme rebinds the 25 amino-acid peptide in a different conformation and catalyzes macrocyclization of the N-terminal eight residues. This chain is Dual function macrocyclase-peptidase POPB, found in Amanita bisporigera (Destroying angel).